Consider the following 351-residue polypeptide: D-alanine--D-alanine ligase (351 aa).

The ATP-grasp domain occupies 141 to 349 (KAAFSAAGLP…ISQLVARLIE (209 aa)). 176–231 (ETQLGYPCFIKPANLGSSVGISKAYDKKELLNGLDLAAQLDSRIVVEKNIKARELE) contacts ATP. The Mg(2+) site is built by D302, E316, and N318.

This sequence belongs to the D-alanine--D-alanine ligase family. It depends on Mg(2+) as a cofactor. Requires Mn(2+) as cofactor.

It localises to the cytoplasm. It catalyses the reaction 2 D-alanine + ATP = D-alanyl-D-alanine + ADP + phosphate + H(+). The protein operates within cell wall biogenesis; peptidoglycan biosynthesis. Its function is as follows. Cell wall formation. This Prochlorococcus marinus (strain SARG / CCMP1375 / SS120) protein is D-alanine--D-alanine ligase.